Consider the following 500-residue polypeptide: Endothelial lipase (500 aa).

The signal sequence occupies residues 1 to 20 (MSNSVPLLCFWSLCYCFAAG). C64 and C77 are oxidised to a cystine. 2 N-linked (GlcNAc...) asparagine glycosylation sites follow: N80 and N136. Residue S169 is the Nucleophile of the active site. The active-site Charge relay system is the D193. A disulfide bridge connects residues C252 and C272. The Charge relay system role is filled by H274. 2 cysteine pairs are disulfide-bonded: C297–C316 and C308–C311. 325-337 (KMRNKRNSKMYLK) provides a ligand contact to heparin. Residues 347-482 (YHYQMKIHVF…SPGRELWFRK (136 aa)) form the PLAT domain. 3 N-linked (GlcNAc...) asparagine glycosylation sites follow: N393, N469, and N491. Cysteines 463 and 483 form a disulfide.

It belongs to the AB hydrolase superfamily. Lipase family. As to quaternary structure, head to tail homodimer. As to expression, high level of expression in the liver, placenta, lung, thyroid, kidney, testis and in the corpus luteum of the ovary. Expressed also in coronary artery endothelial cells, umbilical vein endothelial cells and in hepatocytes and osteosarcoma cell lines. Not detected in heart, brain and muscle.

The protein resides in the secreted. It carries out the reaction a triacylglycerol + H2O = a diacylglycerol + a fatty acid + H(+). The enzyme catalyses a 1,2-diacyl-sn-glycero-3-phosphocholine + H2O = a 2-acyl-sn-glycero-3-phosphocholine + a fatty acid + H(+). The catalysed reaction is 1,2,3-tri-(9Z-octadecenoyl)-glycerol + H2O = di-(9Z)-octadecenoylglycerol + (9Z)-octadecenoate + H(+). It catalyses the reaction 1,2,3-tributanoylglycerol + H2O = dibutanoylglycerol + butanoate + H(+). It carries out the reaction 1,2-dihexadecanoyl-sn-glycero-3-phosphocholine + H2O = hexadecanoyl-sn-glycero-3-phosphocholine + hexadecanoate + H(+). With respect to regulation, inhibited by serum and NaCl. Exerts both phospholipase and triglyceride lipase activities. More active as a phospholipase than a triglyceride lipase. Hydrolyzes triglycerides, both with short-chain fatty acyl groups (tributyrin) and long-chain fatty acyl groups (triolein) with similar levels of activity toward both types of substrates. Hydrolyzes high density lipoproteins (HDL) more efficiently than other lipoproteins. This chain is Endothelial lipase (LIPG), found in Homo sapiens (Human).